The primary structure comprises 111 residues: Kalata-B7 (111 aa).

An N-terminal signal peptide occupies residues 1-28 (MAKFTNCLALCLLLAAVVGAFGVELSEA). A propeptide spanning residues 29-75 (DKSAVVNEIAEKMALQEMLDGVDKLFLRKMKSSETTLTMFLKEMQLK) is cleaved from the precursor. Residues 76–104 (GLPVCGETCTLGTCYTQGCTCSWPICKRN) constitute a cross-link (cyclopeptide (Gly-Asn)). Disulfide bonds link C80/C94, C84/C96, and C89/C101. The propeptide occupies 105 to 111 (GLPDVAA).

Post-translationally, kalata-B7 is a cyclic peptide.

In terms of biological role, probably participates in a plant defense mechanism. Has hemolytic activity. The chain is Kalata-B7 (OAK3) from Oldenlandia affinis.